Consider the following 735-residue polypeptide: Disintegrin and metalloproteinase domain-containing protein 2 (735 aa).

A signal peptide spans 1 to 15; it reads MLCLLLLLCGLASLG. Positions 16–176 are excised as a propeptide; that stretch reads GPLKKYVENS…KIKSIKSSVR (161 aa). Topologically, residues 16 to 680 are extracellular; it reads GPLKKYVENS…EGAYHTKSRK (665 aa). Residues asparagine 55, asparagine 220, and asparagine 288 are each glycosylated (N-linked (GlcNAc...) asparagine). Positions 178 to 375 constitute a Peptidase M12B domain; that stretch reads HYIEMHIIVE…QVSQCLQNQP (198 aa). 4 disulfide bridges follow: cysteine 287–cysteine 370, cysteine 329–cysteine 354, cysteine 331–cysteine 336, and cysteine 442–cysteine 455. An N-linked (GlcNAc...) asparagine glycan is attached at asparagine 353. The region spanning 384–470 is the Disintegrin domain; it reads NPVCGNNRVE…ACQEDLYVIN (87 aa). Residues asparagine 456 and asparagine 564 are each glycosylated (N-linked (GlcNAc...) asparagine). Residues 610–643 enclose the EGF-like domain; the sequence is LGYDCTPATCSDHGVCNNKRHCHCNPTYVPPNCE. Intrachain disulfides connect cysteine 614/cysteine 625, cysteine 619/cysteine 631, and cysteine 633/cysteine 642. Residues 681–701 form a helical membrane-spanning segment; sequence WPFFLIIPFFVIFSVLVATVV. The Cytoplasmic portion of the chain corresponds to 702–735; it reads KVYYQKKKWKTEDYANDENIESESEPKSSKVSSK. Residues 716 to 735 form a disordered region; sequence ANDENIESESEPKSSKVSSK. A Phosphoserine modification is found at serine 723.

In terms of assembly, heterodimer with ADAM1/fertilin subunit alpha. Post-translationally, the signal and the metalloprotease domain are cleaved during the epididymal maturation of the spermatozoa. Expressed specifically in testis.

The protein localises to the membrane. In terms of biological role, sperm surface membrane protein that may be involved in sperm-egg plasma membrane adhesion and fusion during fertilization. Could have a direct role in sperm-zona binding or migration of sperm from the uterus into the oviduct. Interactions with egg membrane could be mediated via binding between its disintegrin-like domain to one or more integrins receptors on the egg. This is a non catalytic metalloprotease-like protein. The protein is Disintegrin and metalloproteinase domain-containing protein 2 (ADAM2) of Cavia porcellus (Guinea pig).